The sequence spans 131 residues: MTTSSYFLLVALGLLLYLCQSSFGTEHTCEPGASPHPQGKCGPELAEFHETMCEVEESLQGGTDDARKKRGRASLLRKRRGFLSMLKARAKRNEASPLPRAGRGIVCECCKNSCTYEEITEYCPPVTEGSG.

The first 24 residues, 1 to 24, serve as a signal peptide directing secretion; that stretch reads MTTSSYFLLVALGLLLYLCQSSFG. 4 cysteine pairs are disulfide-bonded: cysteine 29–cysteine 107, cysteine 41–cysteine 110, cysteine 53–cysteine 123, and cysteine 109–cysteine 114. Residues 59–92 constitute a propeptide, c peptide; it reads LQGGTDDARKKRGRASLLRKRRGFLSMLKARAKR. Glutamate 118 carries the post-translational modification 4-carboxyglutamate; partial. Serine 130 is modified (serine amide).

The protein belongs to the insulin family. As to quaternary structure, heterodimer of A and B chains; disulfide-linked. Expressed by the venom gland.

It localises to the secreted. In terms of biological role, this venom insulin facilitates prey capture by rapidly inducing hypoglycemic shock. Intraperitoneal injection of this peptide into zebrafish lowers blood glucose with the same potency than human insulin. In vivo, when applied to water, this peptide reduces overall locomotor activity of zebrafish larvae, observed as a significant decrease in the percentage of time spent swimming and movement frequency. This chain is Con-Ins Q1b, found in Conus quercinus (Oak cone).